The primary structure comprises 634 residues: DNA-directed RNA polymerase subunit gamma (634 aa).

Zn(2+) is bound by residues Cys74, Cys76, Cys89, and Cys92. Mg(2+) is bound by residues Asp471, Asp473, and Asp475.

Belongs to the RNA polymerase beta' chain family. RpoC1 subfamily. In terms of assembly, in cyanobacteria the RNAP catalytic core is composed of 2 alpha, 1 beta, 1 beta', 1 gamma and 1 omega subunit. When a sigma factor is associated with the core the holoenzyme is formed, which can initiate transcription. Requires Mg(2+) as cofactor. It depends on Zn(2+) as a cofactor.

The enzyme catalyses RNA(n) + a ribonucleoside 5'-triphosphate = RNA(n+1) + diphosphate. Functionally, DNA-dependent RNA polymerase catalyzes the transcription of DNA into RNA using the four ribonucleoside triphosphates as substrates. In Prochlorococcus marinus (strain MIT 9303), this protein is DNA-directed RNA polymerase subunit gamma.